Here is a 1116-residue protein sequence, read N- to C-terminus: Cation channel sperm-associated auxiliary subunit beta (1116 aa).

At 1 to 1053 (MESPLIYVSV…QIYVDEAPLP (1053 aa)) the chain is on the extracellular side. The cysteines at positions 35 and 60 are disulfide-linked. 5 N-linked (GlcNAc...) asparagine glycosylation sites follow: Asn90, Asn100, Asn118, Asn226, and Asn321. An intrachain disulfide couples Cys189 to Cys302. Cys330 and Cys343 are joined by a disulfide. N-linked (GlcNAc...) asparagine glycans are attached at residues Asn618 and Asn690. Disulfide bonds link Cys718-Cys816, Cys829-Cys1037, Cys911-Cys920, and Cys922-Cys937. N-linked (GlcNAc...) asparagine glycosylation is found at Asn913 and Asn921. 2 N-linked (GlcNAc...) asparagine glycosylation sites follow: Asn1010 and Asn1015. Residues 1054–1076 (FPGHTLIAVATAVVLGGLIFIAF) form a helical membrane-spanning segment. The Cytoplasmic portion of the chain corresponds to 1077-1116 (MFQLQGIHPWRTFQRWIRRNQEKFSSISLSELIHRSKSEE).

In terms of assembly, component of the CatSper complex or CatSpermasome composed of the core pore-forming members CATSPER1, CATSPER2, CATSPER3 and CATSPER4 as well as auxiliary members CATSPERB, CATSPERG, CATSPERD, CATSPERE, CATSPERZ, C2CD6/CATSPERT, TMEM249, TMEM262 and EFCAB9. HSPA1 may be an additional auxiliary complex member. The core complex members CATSPER1, CATSPER2, CATSPER3 and CATSPER4 form a heterotetrameric channel. The auxiliary CATSPERB, CATSPERG, CATSPERD and CATSPERE subunits form a pavilion-like structure over the pore which stabilizes the complex through interactions with CATSPER4, CATSPER3, CATSPER1 and CATSPER2 respectively. TMEM262/CATSPERH interacts with CATSPERB, further stabilizing the complex. C2CD6/CATSPERT interacts at least with CATSPERD and is required for targeting the CatSper complex in the flagellar membrane.

It localises to the cell projection. It is found in the cilium. The protein resides in the flagellum membrane. In terms of biological role, auxiliary component of the CatSper complex, a complex involved in sperm cell hyperactivation. Sperm cell hyperactivation is needed for sperm motility which is essential late in the preparation of sperm for fertilization. This is Cation channel sperm-associated auxiliary subunit beta from Homo sapiens (Human).